The sequence spans 614 residues: V-type proton ATPase catalytic subunit A isoform 1 (614 aa).

247 to 254 (GAFGCGKT) contributes to the ATP binding site.

It belongs to the ATPase alpha/beta chains family. In terms of assembly, V-ATPase is a heteromultimeric enzyme made up of two complexes: the ATP-hydrolytic V1 complex and the proton translocation V0 complex. The V1 complex consists of three catalytic AB heterodimers that form a heterohexamer, three peripheral stalks each consisting of EG heterodimers, one central rotor including subunits D and F, and the regulatory subunits C and H. The proton translocation complex V0 consists of the proton transport subunit a, a ring of proteolipid subunits c9c'', rotary subunit d, subunits e and f, and the accessory subunits VhaAC45 and ATP6AP2.

The catalysed reaction is ATP + H2O + 4 H(+)(in) = ADP + phosphate + 5 H(+)(out). Its activity is regulated as follows. ATP hydrolysis occurs at the interface between the nucleotide-binding domains of subunits A and B. ATP hydrolysis triggers a conformational change in the subunits D and F, which induces a shift of subunit d. The c-ring is subsequently rotated and results in a continuous proton translocation across the membrane. Its function is as follows. Catalytic subunit of the V1 complex of vacuolar(H+)-ATPase (V-ATPase), a multisubunit enzyme composed of a peripheral complex (V1) that hydrolyzes ATP and a membrane integral complex (V0) that translocates protons. V-ATPase is responsible for acidifying and maintaining the pH of intracellular compartments and in some cell types, is targeted to the plasma membrane, where it is responsible for acidifying the extracellular environment. This chain is V-type proton ATPase catalytic subunit A isoform 1 (Vha68-1), found in Drosophila melanogaster (Fruit fly).